The sequence spans 321 residues: Phospho-N-acetylmuramoyl-pentapeptide-transferase (321 aa).

Transmembrane regions (helical) follow at residues Met-1–Ile-21, Met-50–Val-70, Ile-76–Ile-96, Phe-112–Val-132, Ile-140–Trp-160, Gly-176–Leu-196, Ala-200–Leu-220, Val-225–Met-245, Leu-250–Val-270, and Val-300–Val-320.

It belongs to the glycosyltransferase 4 family. MraY subfamily. Requires Mg(2+) as cofactor.

The protein resides in the cell membrane. The catalysed reaction is UDP-N-acetyl-alpha-D-muramoyl-L-alanyl-gamma-D-glutamyl-L-lysyl-D-alanyl-D-alanine + di-trans,octa-cis-undecaprenyl phosphate = Mur2Ac(oyl-L-Ala-gamma-D-Glu-L-Lys-D-Ala-D-Ala)-di-trans,octa-cis-undecaprenyl diphosphate + UMP. The protein operates within cell wall biogenesis; peptidoglycan biosynthesis. Its function is as follows. Catalyzes the initial step of the lipid cycle reactions in the biosynthesis of the cell wall peptidoglycan: transfers peptidoglycan precursor phospho-MurNAc-pentapeptide from UDP-MurNAc-pentapeptide onto the lipid carrier undecaprenyl phosphate, yielding undecaprenyl-pyrophosphoryl-MurNAc-pentapeptide, known as lipid I. In Staphylococcus epidermidis (strain ATCC 35984 / DSM 28319 / BCRC 17069 / CCUG 31568 / BM 3577 / RP62A), this protein is Phospho-N-acetylmuramoyl-pentapeptide-transferase.